The following is a 354-amino-acid chain: Phosphate acyltransferase (354 aa).

Belongs to the PlsX family. As to quaternary structure, homodimer. Probably interacts with PlsY.

The protein localises to the cytoplasm. The catalysed reaction is a fatty acyl-[ACP] + phosphate = an acyl phosphate + holo-[ACP]. The protein operates within lipid metabolism; phospholipid metabolism. Its function is as follows. Catalyzes the reversible formation of acyl-phosphate (acyl-PO(4)) from acyl-[acyl-carrier-protein] (acyl-ACP). This enzyme utilizes acyl-ACP as fatty acyl donor, but not acyl-CoA. The polypeptide is Phosphate acyltransferase (Bordetella petrii (strain ATCC BAA-461 / DSM 12804 / CCUG 43448)).